A 97-amino-acid polypeptide reads, in one-letter code: Large ribosomal subunit protein eL21 (97 aa).

This sequence belongs to the eukaryotic ribosomal protein eL21 family.

The sequence is that of Large ribosomal subunit protein eL21 from Methanococcoides burtonii (strain DSM 6242 / NBRC 107633 / OCM 468 / ACE-M).